A 228-amino-acid polypeptide reads, in one-letter code: Probable octanoyltransferase (228 aa).

The region spanning 27–198 is the BPL/LPL catalytic domain; that stretch reads SGGDDAFILV…AFEEVFEAKV (172 aa). Substrate contacts are provided by residues 65–72, 129–131, and 142–144; these read RGGDATYH, SIG, and GVA. The Acyl-thioester intermediate role is filled by cysteine 160.

Belongs to the LipB family.

The protein resides in the cytoplasm. The catalysed reaction is octanoyl-[ACP] + L-lysyl-[protein] = N(6)-octanoyl-L-lysyl-[protein] + holo-[ACP] + H(+). It participates in protein modification; protein lipoylation via endogenous pathway; protein N(6)-(lipoyl)lysine from octanoyl-[acyl-carrier-protein]: step 1/2. Functionally, catalyzes the transfer of endogenously produced octanoic acid from octanoyl-acyl-carrier-protein onto the lipoyl domains of lipoate-dependent enzymes. Lipoyl-ACP can also act as a substrate although octanoyl-ACP is likely to be the physiological substrate. The sequence is that of Probable octanoyltransferase from Pyrobaculum calidifontis (strain DSM 21063 / JCM 11548 / VA1).